Here is a 501-residue protein sequence, read N- to C-terminus: Beta-secretase 1 (501 aa).

A signal peptide spans 1–21; that stretch reads MAPALRWLLLWVGSGMLPAQG. Positions 22–45 are excised as a propeptide; sequence THLGIRLPLRSGLAGPPLGLRLPR. Over 22–457 the chain is Extracellular; sequence THLGIRLPLR…PQTDESTLMT (436 aa). Residues 75 to 416 enclose the Peptidase A1 domain; sequence YYVEMTVGSP…DRARKRIGFA (342 aa). D93 is a catalytic residue. At K126 the chain carries N6-acetyllysine. 3 N-linked (GlcNAc...) asparagine glycosylation sites follow: N153, N172, and N223. Intrachain disulfides connect C216/C420, C278/C443, and C330/C380. N6-acetyllysine occurs at positions 275, 279, and 285. D289 is a catalytic residue. Residues K299, K300, and K307 each carry the N6-acetyllysine modification. N354 carries N-linked (GlcNAc...) asparagine glycosylation. The helical transmembrane segment at 458-478 threads the bilayer; it reads IAYVMAAICALFMLPLCLMVC. S-palmitoyl cysteine attachment occurs at residues C474, C478, C482, and C485. At 479–501 the chain is on the cytoplasmic side; sequence QWRCLRCLRHQHDDFADDISLLK. The segment at 479–501 is interaction with RTN3; the sequence is QWRCLRCLRHQHDDFADDISLLK. The DXXLL motif lies at 496 to 500; the sequence is DISLL. The residue at position 498 (S498) is a Phosphoserine. Residue K501 forms a Glycyl lysine isopeptide (Lys-Gly) (interchain with G-Cter in ubiquitin) linkage.

It belongs to the peptidase A1 family. As to quaternary structure, monomer. Interacts (via DXXLL motif) with GGA1, GGA2 and GGA3 (via their VHS domain); the interaction highly increases when BACE1 is phosphorylated at Ser-498. Interacts with RTN1; RTN2; RTN3 and RTN4; the interaction leads to inhibition of amyloid precursor protein processing. Interacts with SNX6. Interacts with PCSK9. Interacts with NAT8 and NAT8B. Interacts with BIN1. Interacts (via extracellular domain) with ADAM10 (via extracellular domain). Interacts with SORL1; this interaction may affect binding with APP and hence reduce APP cleavage. Interacts with NRDC AND NRG1. In terms of processing, palmitoylation mediates lipid raft localization. Post-translationally, acetylated in the endoplasmic reticulum at Lys-126, Lys-275, Lys-279, Lys-285, Lys-299, Lys-300 and Lys-307. Acetylation by NAT8 and NAT8B is transient and deacetylation probably occurs in the Golgi. Acetylation regulates the maturation, the transport to the plasma membrane, the stability and the expression of the protein. Ubiquitinated at Lys-501, ubiquitination leads to lysosomal degradation. Monoubiquitinated and 'Lys-63'-linked polyubitinated. Deubiquitnated by USP8; inhibits lysosomal degradation. In terms of processing, phosphorylation at Ser-498 is required for interaction with GGA1 and retrograded transport from endosomal compartments to the trans-Golgi network. Non-phosphorylated BACE1 enters a direct recycling route to the cell surface. Post-translationally, N-Glycosylated. Addition of a bisecting N-acetylglucosamine by MGAT3 blocks lysosomal targeting, further degradation and is required for maintaining stability under stress conditions.

The protein resides in the cell membrane. It localises to the golgi apparatus. The protein localises to the trans-Golgi network. Its subcellular location is the endoplasmic reticulum. It is found in the endosome. The protein resides in the cell surface. It localises to the cytoplasmic vesicle membrane. The protein localises to the membrane raft. Its subcellular location is the lysosome. It is found in the late endosome. The protein resides in the early endosome. It localises to the recycling endosome. The protein localises to the cell projection. Its subcellular location is the axon. It is found in the dendrite. It carries out the reaction Broad endopeptidase specificity. Cleaves Glu-Val-Asn-Leu-|-Asp-Ala-Glu-Phe in the Swedish variant of Alzheimer's amyloid precursor protein.. With respect to regulation, inhibited by RTN3 and RTN4. Its function is as follows. Responsible for the proteolytic processing of the amyloid precursor protein (APP). Cleaves at the N-terminus of the A-beta peptide sequence, between residues 671 and 672 of APP, leads to the generation and extracellular release of beta-cleaved soluble APP, and a corresponding cell-associated C-terminal fragment which is later released by gamma-secretase. Cleaves CHL1. The sequence is that of Beta-secretase 1 (Bace1) from Rattus norvegicus (Rat).